The primary structure comprises 1004 residues: Bifunctional glutamine synthetase adenylyltransferase/adenylyl-removing enzyme (1004 aa).

An adenylyl removase region spans residues 1-497 (MCCTTVVVVR…LHAKLFYQPL (497 aa)). The segment at 502–1004 (GPASLEIRHG…KTFVRKVFGS (503 aa)) is adenylyl transferase.

Belongs to the GlnE family. Mg(2+) is required as a cofactor.

It carries out the reaction [glutamine synthetase]-O(4)-(5'-adenylyl)-L-tyrosine + phosphate = [glutamine synthetase]-L-tyrosine + ADP. The catalysed reaction is [glutamine synthetase]-L-tyrosine + ATP = [glutamine synthetase]-O(4)-(5'-adenylyl)-L-tyrosine + diphosphate. In terms of biological role, involved in the regulation of glutamine synthetase GlnA, a key enzyme in the process to assimilate ammonia. When cellular nitrogen levels are high, the C-terminal adenylyl transferase (AT) inactivates GlnA by covalent transfer of an adenylyl group from ATP to specific tyrosine residue of GlnA, thus reducing its activity. Conversely, when nitrogen levels are low, the N-terminal adenylyl removase (AR) activates GlnA by removing the adenylyl group by phosphorolysis, increasing its activity. The regulatory region of GlnE binds the signal transduction protein PII (GlnB) which indicates the nitrogen status of the cell. This is Bifunctional glutamine synthetase adenylyltransferase/adenylyl-removing enzyme from Mycobacterium leprae (strain TN).